Reading from the N-terminus, the 168-residue chain is Siroheme decarboxylase NirH subunit (168 aa).

This sequence belongs to the Ahb/Nir family. As to quaternary structure, probably forms a complex composed of NirD, NirL, NirG and NirH. All proteins are required for the total conversion of siroheme to didecarboxysiroheme.

The enzyme catalyses siroheme + 2 H(+) = 12,18-didecarboxysiroheme + 2 CO2. Its pathway is porphyrin-containing compound metabolism. Functionally, involved in heme d1 biosynthesis. Catalyzes the decarboxylation of siroheme into didecarboxysiroheme. The polypeptide is Siroheme decarboxylase NirH subunit (Stutzerimonas stutzeri (Pseudomonas stutzeri)).